The primary structure comprises 174 residues: MKFLVSLVIFSLFLNGFATAQTLIQDSCKKAFAKDPQLSYDFCVNSLTQDPQSKAATTLESLVLASTKTAAAKITNLKGIVAQDLKDQRYQDIVEDLKLCLGFYNDANDDLTTALANIKSRDYQGANINLSAALDVPGNCEDDFKEAKKTSPITNENSILFKTILIPLAFTNML.

A signal peptide spans 1–20 (MKFLVSLVIFSLFLNGFATA). Intrachain disulfides connect Cys-28–Cys-43 and Cys-100–Cys-140. Asn-129 carries N-linked (GlcNAc...) asparagine glycosylation.

Belongs to the PMEI family.

It localises to the secreted. It is found in the extracellular space. Its subcellular location is the apoplast. Functionally, pectin methylesterase (PME) inhibitor involved in the maintenance of cell wall integrity in response to necrotrophic pathogens. Modulates PME activity and pectin methylesterification during infection by Botrytis cinerea and contributes to resistance against the pathogen. The polypeptide is Pectinesterase inhibitor 12 (Arabidopsis thaliana (Mouse-ear cress)).